A 183-amino-acid chain; its full sequence is Probable chorismate pyruvate-lyase (183 aa).

The substrate site is built by R79, L115, and E168.

Belongs to the UbiC family.

It is found in the cytoplasm. It carries out the reaction chorismate = 4-hydroxybenzoate + pyruvate. Its pathway is cofactor biosynthesis; ubiquinone biosynthesis. Removes the pyruvyl group from chorismate, with concomitant aromatization of the ring, to provide 4-hydroxybenzoate (4HB) for the ubiquinone pathway. In Chromohalobacter salexigens (strain ATCC BAA-138 / DSM 3043 / CIP 106854 / NCIMB 13768 / 1H11), this protein is Probable chorismate pyruvate-lyase.